The sequence spans 822 residues: MNGHISNHPSSFGMYPSQMNGYGSSPTFSQTDREHGSKTSAKALYEQRKNYARDSVSSVSDISQYRVEHLTTFVLDRKDAMITVDDGIRKLKLLDAKGKVWTQDMILQVDDRAVSLIDLESKNELENFPLNTIQHCQAVMHSCSYDSVLALVCKEPTQNKPDLHLFQCDEVKANLISEDIESAISDSKGGKQKRRPDALRMISNADPSIPPPPRAPAPAPPGTVTQVDVRSRVAAWSAWAADQGDFEKPRQYHEQEETPEMMAARIDRDVQILNHILDDIEFFITKLQKAAEAFSELSKRKKNKKGKRKGPGEGVLTLRAKPPPPDEFLDCFQKFKHGFNLLAKLKSHIQNPSAADLVHFLFTPLNMVVQATGGPELASSVLSPLLNKDTIDFLNYTVNGDERQLWMSLGGTWMKARAEWPKEQFIPPYVPRFRNGWEPPMLNFMGATMEQDLYQLAESVANVAEHQRKQEIKRLSTEHSSVSEYHPADGYAFSSNIYTRGSHLDQGEAAVAFKPTSNRHIDRNYEPLKTQPKKYAKSKYDFVARNNSELSVLKDDILEILDDRKQWWKVRNASGDSGFVPNNILDIVRPPESGLGRADPPYTHTIQKQRMEYGPRPADTPPAPSPPPTPAPVPVPLPPSTPAPVPVSKVPANITRQNSSSSDSGGSIVRDSQRHKQLPVDRRKSQMEEVQDELIHRLTIGRSAAQKKFHVPRQNVPVINITYDSTPEDVKTWLQSKGFNPVTVNSLGVLNGAQLFSLNKDELRTVCPEGARVYSQITVQKAALEDSSGSSELQEIMRRRQEKISAAASDSGVESFDEGSSH.

Composition is skewed to polar residues over residues 1–10 and 17–30; these read MNGHISNHPS and SQMN…TFSQ. Positions 1-39 are disordered; the sequence is MNGHISNHPSSFGMYPSQMNGYGSSPTFSQTDREHGSKT. Phosphoserine is present on Ser58. The PTB domain occupies 64–194; it reads QYRVEHLTTF…SDSKGGKQKR (131 aa). 2 disordered regions span residues 202 to 225 and 298 to 320; these read ISNA…GTVT and SKRK…TLRA. Pro residues predominate over residues 208–221; sequence SIPPPPRAPAPAPP. Residue Thr223 is modified to Phosphothreonine. A compositionally biased stretch (basic residues) spans 299 to 309; the sequence is KRKKNKKGKRK. Thr317 bears the Phosphothreonine mark. Ser476 bears the Phosphoserine mark. An SH3 domain is found at 531–590; the sequence is QPKKYAKSKYDFVARNNSELSVLKDDILEILDDRKQWWKVRNASGDSGFVPNNILDIVRP. The interval 612–689 is disordered; sequence EYGPRPADTP…VDRRKSQMEE (78 aa). Pro residues predominate over residues 618 to 645; the sequence is ADTPPAPSPPPTPAPVPVPLPPSTPAPV. Phosphoserine is present on Ser625. Thr629 carries the phosphothreonine; by MAPK modification. Positions 649–822 are effector region; sequence KVPANITRQN…VESFDEGSSH (174 aa). 3 positions are modified to phosphoserine: Ser659, Ser662, and Ser685. The span at 671–687 shows a compositional bias: basic and acidic residues; the sequence is DSQRHKQLPVDRRKSQM. The segment at 680–698 is amphipathic helix; it reads VDRRKSQMEEVQDELIHRL. Helix bundle regions lie at residues 718-738, 752-757, 762-767, and 766-785; these read VINI…QSKG, GAQLFS, ELRTVC, and VCPE…AALE. Residues 787–822 are disordered; sequence SSGSSELQEIMRRRQEKISAAASDSGVESFDEGSSH. Residues Ser811 and Ser815 each carry the phosphoserine modification.

The protein belongs to the EPS8 family. As to quaternary structure, homodimer. Part of a complex consisting of ABI1, EPS8 and SOS1. Interacts with MYO15A and WHRN. Interacts with LANCL1. Interacts with EGFR; mediates EPS8 phosphorylation. Interacts with BAIAP2. Interacts with SHB. In terms of processing, ubiquitinated by the SCF(FBXW5) E3 ubiquitin-protein ligase complex during G2 phase, leading to its transient degradation and subsequent cell shape changes required to allow mitotic progression. Reappears at the midzone of dividing cells. Post-translationally, phosphorylation at Ser-625 and Thr-629 by MAPK following BDNF treatment promotes removal from actin and filopodia formation. Phosphorylated by several receptor tyrosine kinases. As to expression, expressed in all tissues analyzed, including heart, brain, placenta, lung, liver, skeletal muscle, kidney and pancreas. Expressed in all epithelial and fibroblastic lines examined and in some, but not all, hematopoietic cells.

Its subcellular location is the cytoplasm. It is found in the cell cortex. It localises to the cell projection. The protein localises to the ruffle membrane. The protein resides in the growth cone. Its subcellular location is the stereocilium. It is found in the synapse. It localises to the synaptosome. Signaling adapter that controls various cellular protrusions by regulating actin cytoskeleton dynamics and architecture. Depending on its association with other signal transducers, can regulate different processes. Together with SOS1 and ABI1, forms a trimeric complex that participates in transduction of signals from Ras to Rac by activating the Rac-specific guanine nucleotide exchange factor (GEF) activity. Acts as a direct regulator of actin dynamics by binding actin filaments and has both barbed-end actin filament capping and actin bundling activities depending on the context. Displays barbed-end actin capping activity when associated with ABI1, thereby regulating actin-based motility process: capping activity is auto-inhibited and inhibition is relieved upon ABI1 interaction. Also shows actin bundling activity when associated with BAIAP2, enhancing BAIAP2-dependent membrane extensions and promoting filopodial protrusions. Involved in the regulation of processes such as axonal filopodia growth, stereocilia length, dendritic cell migration and cancer cell migration and invasion. Acts as a regulator of axonal filopodia formation in neurons: in the absence of neurotrophic factors, negatively regulates axonal filopodia formation via actin-capping activity. In contrast, it is phosphorylated in the presence of BDNF leading to inhibition of its actin-capping activity and stimulation of filopodia formation. Component of a complex with WHRN and MYO15A that localizes at stereocilia tips and is required for elongation of the stereocilia actin core. Indirectly involved in cell cycle progression; its degradation following ubiquitination being required during G2 phase to promote cell shape changes. This Homo sapiens (Human) protein is Epidermal growth factor receptor kinase substrate 8 (EPS8).